We begin with the raw amino-acid sequence, 243 residues long: MSKTHFGFETVEENEKAKKVAGVFHSVASNYDLMNDLMSAGLHRAWKAFTIAQANVRPGGKVLDIAAGTGDLTKAFAKAAGPTGEVWHTDINESMLRVGRDRLLDKGVVTPSLLCDAEKLPFPDNYFDVVTVAFGLRNMTHKDSALAEMRRVAKPGGRVMVLEFSKVWEPLKKAYDVYSFKVLPWLGDKFAKDADSYRYLAESIRMHPDQETLKTMMEQAGLDAVKYYNLSGGVVALHVGTKY.

Residues Thr69, Asp90, and 116–117 each bind S-adenosyl-L-methionine; that span reads DA.

This sequence belongs to the class I-like SAM-binding methyltransferase superfamily. MenG/UbiE family.

The enzyme catalyses a 2-demethylmenaquinol + S-adenosyl-L-methionine = a menaquinol + S-adenosyl-L-homocysteine + H(+). The catalysed reaction is a 2-methoxy-6-(all-trans-polyprenyl)benzene-1,4-diol + S-adenosyl-L-methionine = a 5-methoxy-2-methyl-3-(all-trans-polyprenyl)benzene-1,4-diol + S-adenosyl-L-homocysteine + H(+). The protein operates within quinol/quinone metabolism; menaquinone biosynthesis; menaquinol from 1,4-dihydroxy-2-naphthoate: step 2/2. It functions in the pathway cofactor biosynthesis; ubiquinone biosynthesis. Its function is as follows. Methyltransferase required for the conversion of demethylmenaquinol (DMKH2) to menaquinol (MKH2) and the conversion of 2-polyprenyl-6-methoxy-1,4-benzoquinol (DDMQH2) to 2-polyprenyl-3-methyl-6-methoxy-1,4-benzoquinol (DMQH2). This chain is Ubiquinone/menaquinone biosynthesis C-methyltransferase UbiE, found in Burkholderia mallei (strain NCTC 10247).